Reading from the N-terminus, the 62-residue chain is Protein YhjR (62 aa).

The chain is Protein YhjR (yhjR) from Escherichia coli (strain K12).